We begin with the raw amino-acid sequence, 239 residues long: Small ribosomal subunit protein uS2c (239 aa).

The protein belongs to the universal ribosomal protein uS2 family.

The protein localises to the plastid. The sequence is that of Small ribosomal subunit protein uS2c (rps2) from Aneura mirabilis (Parasitic liverwort).